The following is a 303-amino-acid chain: Putative AraC-like transcription regulator (303 aa).

The 99-residue stretch at 202–300 folds into the HTH araC/xylS-type domain; it reads ASALTFLHRD…GMNPGDYRKH (99 aa). 2 consecutive DNA-binding regions (H-T-H motif) follow at residues 219-240 and 267-290; these read AELA…KATV and LAAI…KRVL.

In Streptomyces antibioticus, this protein is Putative AraC-like transcription regulator.